Reading from the N-terminus, the 335-residue chain is Auxin-responsive protein IAA6 (335 aa).

The EAR-like (transcriptional repression) signature appears at 51–55 (LKLGL). 3 disordered regions span residues 81–102 (LSFF…GAKR), 143–180 (KKGC…VGWP), and 188–207 (NLAS…DNAN). The 105-residue stretch at 217–321 (NPLVKINMDG…TAKRLRVLRS (105 aa)) folds into the PB1 domain.

It belongs to the Aux/IAA family. In terms of assembly, homodimers and heterodimers. In terms of tissue distribution, highly expressed in roots. Expressed in shoots and flowers.

It is found in the nucleus. In terms of biological role, aux/IAA proteins are short-lived transcriptional factors that function as repressors of early auxin response genes at low auxin concentrations. The chain is Auxin-responsive protein IAA6 (IAA6) from Oryza sativa subsp. japonica (Rice).